We begin with the raw amino-acid sequence, 132 residues long: Large ribosomal subunit protein bL17 (132 aa).

Belongs to the bacterial ribosomal protein bL17 family. In terms of assembly, part of the 50S ribosomal subunit. Contacts protein L32.

This Polaromonas sp. (strain JS666 / ATCC BAA-500) protein is Large ribosomal subunit protein bL17.